The primary structure comprises 440 residues: Cyclic dipeptide prenyltransferase (440 aa).

Positions 1-33 (MDGEMTASPPDISACDTSAVDEQTGQSGQSQAP) are disordered. The segment covering 20–32 (VDEQTGQSGQSQA) has biased composition (polar residues). 2 residues coordinate substrate: T108 and E116. The dimethylallyl diphosphate site is built by R129, K219, and Y221. F223 contacts substrate. Dimethylallyl diphosphate-binding residues include K286, Y288, Y366, Y431, and Y435.

This sequence belongs to the tryptophan dimethylallyltransferase family.

The catalysed reaction is harmol + dimethylallyl diphosphate = 6-(3-dimethylallyl)harmol + diphosphate. The enzyme catalyses an N-terminal L-tryptophanyl-L-alpha-aminoacyl-[peptide] + H2O = an N-terminal L-alpha-aminoacyl-[peptide] + L-tryptophan. It catalyses the reaction (R)-benzodiazepinedione + dimethylallyl diphosphate = (2S,3R,11R)-aszonalenin + diphosphate. It carries out the reaction (S)-benzodiazepinedione + dimethylallyl diphosphate = (2S,3R,11S)-aszonalenin + diphosphate. Its function is as follows. Prenyltransferase that catalyzes reverse prenylation at position N-1 of tryptophan-containing cyclic dipeptides. Accepts only dimethylallyl diphosphate (DMAPP) as the prenyl donor but shows broad substrate specificities toward its aromatic substrates. Also shows tryptophan aminopeptidase activity with preference for linear peptides containing a tryptophanyl moiety at the N-terminus. The polypeptide is Cyclic dipeptide prenyltransferase (Aspergillus fumigatus (Neosartorya fumigata)).